The sequence spans 342 residues: Heparan sulfate glucosamine 3-O-sulfotransferase 6 (342 aa).

Over 1–31 (MAGSGGLGGGAGDLQGAGTGQGTALRALRAP) the chain is Cytoplasmic. The helical; Signal-anchor for type II membrane protein transmembrane segment at 32–49 (LALVVLLLSAYCLFALPG) threads the bilayer. Residues 50 to 342 (RCPPAARAPA…QMTGQDFGWD (293 aa)) lie on the Lumenal side of the membrane. A disordered region spans residues 56-75 (RAPAPVPAPAEPPHTSLRLR). 100–104 (KGGTR) contacts 3'-phosphoadenylyl sulfate. Substrate contacts are provided by residues 122–128 (EPHFFDR) and 153–156 (KTPS). Residues R181 and S189 each contribute to the 3'-phosphoadenylyl sulfate site. 220–221 (WS) is a binding site for substrate. The N-linked (GlcNAc...) asparagine glycan is linked to N281. The cysteines at positions 288 and 300 are disulfide-linked. Residue 305–309 (KGRPH) participates in 3'-phosphoadenylyl sulfate binding.

The protein belongs to the sulfotransferase 1 family. In terms of tissue distribution, expressed in liver and kidney, followed by heart, brain, lung and testis.

The protein localises to the golgi apparatus membrane. The catalysed reaction is alpha-D-glucosaminyl-[heparan sulfate](n) + 3'-phosphoadenylyl sulfate = 3-sulfo-alpha-D-glucosaminyl-[heparan sulfate](n) + adenosine 3',5'-bisphosphate + H(+). Sulfotransferase that utilizes 3'-phospho-5'-adenylyl sulfate (PAPS) to catalyze the transfer of a sulfo group to heparan sulfate. Unlike 3-OST-1, does not convert non-anticoagulant heparan sulfate to anticoagulant heparan sulfate. In Mus musculus (Mouse), this protein is Heparan sulfate glucosamine 3-O-sulfotransferase 6 (Hs3st6).